The primary structure comprises 73 residues: uncharacterized protein (73 aa).

This is an uncharacterized protein from Swinepox virus (strain Kasza) (SWPV).